Reading from the N-terminus, the 1039-residue chain is RNA-binding protein Unr (1039 aa).

Residues Thr49–Pro62 show a composition bias toward polar residues. Disordered stretches follow at residues Thr49–His126 and Ser165–Thr184. Composition is skewed to low complexity over residues Gln63–Gln80, Gln89–His126, and Ser165–Ser182. The CSD 1 domain occupies Arg186–Lys250. The CSD 2; degenerate domain occupies Arg261–Leu337. In terms of domain architecture, CSD 3 spans Lys345–Arg413. Positions Val428–Ile503 constitute a CSD 4; degenerate domain. Residues Arg517–His585 form the CSD 5 domain. In terms of domain architecture, CSD 6; degenerate spans Phe593–Gln673. The segment at Gln721–Asn741 is disordered. The span at Gly732 to Asn741 shows a compositional bias: low complexity. The CSD 7 domain occupies Val763–Met831. Positions Thr846–Val919 constitute a CSD 8; degenerate domain. Residues Lys922 to Lys987 form the CSD 9 domain.

Belongs to the UNR family. In terms of assembly, interacts with Sxl; cooperates with Sxl to prevent translation of msl-2 transcripts. Interacts with mle; promoting association between mle and roX2 non-coding RNA. Interacts (via CSD domain 7-9) with pAbp; promoting translation inhibition of msl-2 transcripts.

The protein localises to the cytoplasm. Functionally, RNA-binding protein that acts as a regulator of dosage compensation in both males and females. In males, acts as positive regulator of dosage compensation by promoting assembly of the MSL complex, a multiprotein complex that mediates X-chromosome dosage compensation. Promotes MSL complex assembly via association with roX1 and roX2 non-coding RNA components of the MSL complex, facilitating the interaction between non-coding RNAs and mle. In females, acts as an inhibitor of dosage compensation together with Sxl by preventing production of msl-2 protein, an essential component of the MSL complex. Specifically binds to the 3'-UTR of msl-2 transcripts, and cooperates with Sxl to prevent translation initiation of msl-2 transcripts. Mechanistically, Sxl and Unr inhibit translation initiation by preventing ribosome recruitment after pAbp-mediated recruitment of the eIF4F complex. The protein is RNA-binding protein Unr of Drosophila melanogaster (Fruit fly).